The sequence spans 427 residues: Tegument protein VP16 homolog (427 aa).

Belongs to the herpesviridae tegument protein VP16 protein family.

It is found in the virion tegument. The protein localises to the host nucleus. Transcriptional activator of immediate-early (IE) gene products (alpha genes). Acts as a key activator of lytic infection by initiating the lytic program through the assembly of the transcriptional regulatory VP16-induced complex composed of VP16 and two cellular factors, HCFC1 and POU2F1. VP16-induced complex represents a regulatory switch: when it is on, it promotes IE-gene expression and thus lytic infection, and when it is off, it limits IE-gene transcription favoring latent infection. In terms of biological role, may play a role in the aggregation of tegument proteins around nucleocapsids during virus morphogenesis. This Gallus gallus (Chicken) protein is Tegument protein VP16 homolog (MDV061).